A 495-amino-acid polypeptide reads, in one-letter code: UDP-N-acetylmuramate--L-alanine ligase (495 aa).

153-159 (GTHGKTT) is a binding site for ATP.

Belongs to the MurCDEF family.

Its subcellular location is the cytoplasm. The catalysed reaction is UDP-N-acetyl-alpha-D-muramate + L-alanine + ATP = UDP-N-acetyl-alpha-D-muramoyl-L-alanine + ADP + phosphate + H(+). It functions in the pathway cell wall biogenesis; peptidoglycan biosynthesis. In terms of biological role, cell wall formation. In Gloeothece citriformis (strain PCC 7424) (Cyanothece sp. (strain PCC 7424)), this protein is UDP-N-acetylmuramate--L-alanine ligase.